The primary structure comprises 561 residues: 4-coumarate--CoA ligase 3 (561 aa).

Positions 213, 214, 215, 216, 217, and 221 each coordinate ATP. (E)-4-coumaroyl-AMP-binding residues include Y263 and S267. K284 lines the CoA pocket. Positions 286–355 (EIGALLDLIQ…RRLPQAILGQ (70 aa)) are SBD1. Positions 333, 355, 356, 360, and 368 each coordinate (E)-4-coumaroyl-AMP. ATP is bound by residues Q355, G356, and T360. The tract at residues 356–423 (GYGMTEAGPV…IRGQQIMKEY (68 aa)) is SBD2. Residues D444 and R459 each coordinate ATP. Residues K461 and K465 each contribute to the (E)-4-coumaroyl-AMP site. Positions 467 and 468 each coordinate CoA. K550 serves as a coordination point for ATP.

Belongs to the ATP-dependent AMP-binding enzyme family. The cofactor is Mg(2+). Preferentially expressed in leaves, flowers and siliques.

The enzyme catalyses (E)-4-coumarate + ATP + CoA = (E)-4-coumaroyl-CoA + AMP + diphosphate. It carries out the reaction (E)-caffeate + ATP + CoA = (E)-caffeoyl-CoA + AMP + diphosphate. The catalysed reaction is (E)-ferulate + ATP + CoA = (E)-feruloyl-CoA + AMP + diphosphate. It catalyses the reaction (E)-4-coumarate + ATP + H(+) = (E)-4-coumaroyl-AMP + diphosphate. The enzyme catalyses (E)-4-coumaroyl-AMP + CoA = (E)-4-coumaroyl-CoA + AMP + H(+). It carries out the reaction (E)-caffeate + ATP + H(+) = (E)-caffeoyl-AMP + diphosphate. The catalysed reaction is (E)-caffeoyl-AMP + CoA = (E)-caffeoyl-CoA + AMP + H(+). It catalyses the reaction (E)-ferulate + ATP + H(+) = (E)-feruloyl-AMP + diphosphate. The enzyme catalyses (E)-feruloyl-AMP + CoA = (E)-feruloyl-CoA + AMP + H(+). Its pathway is phytoalexin biosynthesis; 3,4',5-trihydroxystilbene biosynthesis; 3,4',5-trihydroxystilbene from trans-4-coumarate: step 1/2. Its function is as follows. Produces CoA thioesters of a variety of hydroxy- and methoxy-substituted cinnamic acids, which are used to synthesize several phenylpropanoid-derived compounds, including anthocyanins, flavonoids, isoflavonoids, coumarins, lignin, suberin and wall-bound phenolics. Follows a two-step reaction mechanism, wherein the carboxylate substrate first undergoes adenylation by ATP, followed by a thioesterification in the presence of CoA to yield the final CoA thioesters. This chain is 4-coumarate--CoA ligase 3, found in Arabidopsis thaliana (Mouse-ear cress).